A 25-amino-acid polypeptide reads, in one-letter code: KICQDVKQSLAPCLPYVTGRAPKPA.

In terms of tissue distribution, seeds (at protein level).

Plant non-specific lipid-transfer proteins transfer phospholipids as well as galactolipids across membranes. May play a role in wax or cutin deposition in the cell walls of expanding epidermal cells and certain secretory tissues. Has antibacterial and antifungal activity. Displays antibacterial activity towards both Gram-negative bacteria, P.carotovorum (IC(50)=11.5 uM) and P.syringae (IC(50)=12.0 uM), and Gram-positive bacterium C.michiganensis subsp michiganense (IC(50)=11.2 uM). Also displays antifungal activity towards A.niger VKM F-33 (IC(50)=1.05 uM) and B.cinerea TSKHA (IC(50)=1.88 uM) and relatively moderate activity towards B.sorokiniana VKM F-1448 (IC(50)=1.55 uM). Displays some inhibitory activity towards P.infestans OSV12. The sequence is that of Non-specific lipid-transfer protein 3 from Nigella sativa (Black cumin).